The following is a 578-amino-acid chain: Proline--tRNA ligase (578 aa).

The protein belongs to the class-II aminoacyl-tRNA synthetase family. ProS type 1 subfamily. In terms of assembly, homodimer.

Its subcellular location is the cytoplasm. It catalyses the reaction tRNA(Pro) + L-proline + ATP = L-prolyl-tRNA(Pro) + AMP + diphosphate. Its function is as follows. Catalyzes the attachment of proline to tRNA(Pro) in a two-step reaction: proline is first activated by ATP to form Pro-AMP and then transferred to the acceptor end of tRNA(Pro). As ProRS can inadvertently accommodate and process non-cognate amino acids such as alanine and cysteine, to avoid such errors it has two additional distinct editing activities against alanine. One activity is designated as 'pretransfer' editing and involves the tRNA(Pro)-independent hydrolysis of activated Ala-AMP. The other activity is designated 'posttransfer' editing and involves deacylation of mischarged Ala-tRNA(Pro). The misacylated Cys-tRNA(Pro) is not edited by ProRS. This Paraburkholderia xenovorans (strain LB400) protein is Proline--tRNA ligase.